A 301-amino-acid chain; its full sequence is Phospholipase A1 (301 aa).

Residues cysteine 4 and cysteine 87 are joined by a disulfide bond. The active-site Nucleophile is the serine 137. Catalysis depends on aspartate 165, which acts as the Charge relay system. Cystine bridges form between cysteine 176–cysteine 181 and cysteine 219–cysteine 228. Histidine 230 acts as the Charge relay system in catalysis. Intrachain disulfides connect cysteine 245–cysteine 269, cysteine 246–cysteine 294, and cysteine 262–cysteine 267.

Belongs to the AB hydrolase superfamily. Lipase family. In terms of tissue distribution, expressed by the venom gland.

The protein localises to the secreted. It catalyses the reaction a 1,2-diacyl-sn-glycero-3-phosphocholine + H2O = a 2-acyl-sn-glycero-3-phosphocholine + a fatty acid + H(+). Catalyzes the hydrolysis of phosphatidylcholine with phospholipase A1 activity. May act as an allergen and induce hemolytic activity. The polypeptide is Phospholipase A1 (Vespa crabro (European hornet)).